The sequence spans 1141 residues: Isoleucine--tRNA ligase (1141 aa).

Positions 50-60 match the 'HIGH' region motif; sequence PSANGMPGIHH. The 'KMSKS' region signature appears at 689-693; the sequence is KMSKR. ATP is bound at residue lysine 692.

The protein belongs to the class-I aminoacyl-tRNA synthetase family. IleS type 2 subfamily. In terms of assembly, monomer. Zn(2+) is required as a cofactor.

The protein localises to the cytoplasm. The catalysed reaction is tRNA(Ile) + L-isoleucine + ATP = L-isoleucyl-tRNA(Ile) + AMP + diphosphate. Catalyzes the attachment of isoleucine to tRNA(Ile). As IleRS can inadvertently accommodate and process structurally similar amino acids such as valine, to avoid such errors it has two additional distinct tRNA(Ile)-dependent editing activities. One activity is designated as 'pretransfer' editing and involves the hydrolysis of activated Val-AMP. The other activity is designated 'posttransfer' editing and involves deacylation of mischarged Val-tRNA(Ile). In Bacteroides fragilis (strain YCH46), this protein is Isoleucine--tRNA ligase.